A 266-amino-acid polypeptide reads, in one-letter code: Glioma pathogenesis-related protein 1 (266 aa).

A signal peptide spans 1-21 (MRVTLATIAWMVSFVSNYSHT). Residues 38-175 (VRIHNKFRSE…SNGAHFICNY (138 aa)) enclose the SCP domain. Residues 233–255 (YTSLFLIVNSVILILSVIITILV) traverse the membrane as a helical segment.

It belongs to the CRISP family. As to expression, according to PubMed:8973356, it is ubiquitously expressed with high levels in lung and kidney and low levels in heart and liver. Highly expressed in cell lines derived from nervous system tumors arising from glia, low or absent in non-glial-derived nervous system tumor cell lines. Also found in fetal kidney. According to PubMed:7607567 it is expressed only in brain tumor glioblastoma multiforme/astrocytoma and not in other nervous system tumors or normal fetal or adult tissues.

The protein localises to the membrane. The chain is Glioma pathogenesis-related protein 1 (GLIPR1) from Homo sapiens (Human).